The following is a 728-amino-acid chain: Hepatocyte growth factor (728 aa).

A signal peptide spans 1–32 (MMWGTKLLPVLLLQHVLLHLLLLPVTIPYAEG). Q33 is subject to Pyrrolidone carboxylic acid. Residues 38 to 124 (NTLHEFKKSA…HEFDLYENKD (87 aa)) form the PAN domain. Disulfide bonds link C71-C97, C75-C85, C129-C207, C150-C190, C178-C202, C212-C289, C233-C272, and C261-C284. 2 consecutive Kringle domains span residues 129–207 (CIIG…IPQC) and 212–289 (CMTC…IKMC). N295 is a glycosylation site (N-linked (GlcNAc...) asparagine). 11 disulfide bridges follow: C306-C384, C327-C366, C355-C378, C392-C470, C413-C453, C441-C465, C488-C607, C520-C536, C615-C682, C645-C661, and C672-C700. 2 consecutive Kringle domains span residues 306 to 384 (CIKG…IPKC) and 392 to 470 (CYRG…ISRC). N-linked (GlcNAc...) asparagine glycosylation is present at N403. Residues 496 to 724 (VVNGIPTQTT…YAKWIHKVIL (229 aa)) enclose the Peptidase S1 domain. 2 N-linked (GlcNAc...) asparagine glycosylation sites follow: N569 and N656.

This sequence belongs to the peptidase S1 family. Plasminogen subfamily. Dimer of an alpha chain and a beta chain linked by a disulfide bond. Interacts with SRPX2; the interaction increases HGF mitogenic activity. Post-translationally, the single-chain precursor undergoes proteolytic processing by TMPRSS13 resulting in an active two-chain form. The single-chain precursor undergoes proteolytic processing by HGFAC resulting in an active two-chain form.

In terms of biological role, potent mitogen for mature parenchymal hepatocyte cells, seems to be a hepatotrophic factor, and acts as a growth factor for a broad spectrum of tissues and cell types. Activating ligand for the receptor tyrosine kinase MET by binding to it and promoting its dimerization. Activates MAPK signaling following TMPRSS13 cleavage and activation. The chain is Hepatocyte growth factor (Hgf) from Rattus norvegicus (Rat).